The primary structure comprises 210 residues: N-(5'-phosphoribosyl)anthranilate isomerase (210 aa).

Belongs to the TrpF family.

It carries out the reaction N-(5-phospho-beta-D-ribosyl)anthranilate = 1-(2-carboxyphenylamino)-1-deoxy-D-ribulose 5-phosphate. It participates in amino-acid biosynthesis; L-tryptophan biosynthesis; L-tryptophan from chorismate: step 3/5. This chain is N-(5'-phosphoribosyl)anthranilate isomerase (TRP1), found in Eremothecium gossypii (strain ATCC 10895 / CBS 109.51 / FGSC 9923 / NRRL Y-1056) (Yeast).